The sequence spans 636 residues: MKSENQPEDKRIGKLKREANMQKMKEAAEVEEKKKEENEALVGFFHSYQELFQFFCNNTTIHGAIRLVCSKKNRMKTAFWSILFFFTFGLMYWQFGIIYREYFSFPVNLNLNLNSDRFTFPAVTLCTLNPYRYSALQNELAELDHITQKTLMDLYKYDMSQGQNNRKAQLSRKRSYRSLHYHVSRHPLHRYKRDSQASIEDNNTQVDKNDWKIAFSVCNENNTDCFKQMYSSGVDAVREWYSFHYINILSRIPNAKSLDESDFASFIYACRFNEVTCDKANYTHFHHPIYGNCYTFNANSSNLWMSSLPGINNGLSLVVRTEQNDFIPLLSTVTGARVMVHNQNEPAFMDEGGFNVRPGIETSISMRKETTNRLGGTYSDCTEDGSDVPVKNLYTSRYTEQVCIRSCFQNSIVERCGCGHYFYPLPSGAVYCDYAKHKAWGYCYYKLLAEFKADLLGCFTKCRKPCKVTEYQLSAGYSRWPSTASEAWVFHILSRQNQYNITSKRNGVAKVNIFFEQWNHKSNGESPAFTVVTLLSQLGSQWSLWFGSSVLSVVELVELILDFIAITCILAIHWLNMNRSSDLPIPTSNTTDTFHNVLPPPNTLPRASVDPDVITLPSYKSLESLDLRRVSSQQTE.

Positions 1–28 are disordered; the sequence is MKSENQPEDKRIGKLKREANMQKMKEAA. At 1-77 the chain is on the cytoplasmic side; that stretch reads MKSENQPEDK…VCSKKNRMKT (77 aa). A helical membrane pass occupies residues 78-98; that stretch reads AFWSILFFFTFGLMYWQFGII. Residues 99 to 549 lie on the Extracellular side of the membrane; it reads YREYFSFPVN…SQWSLWFGSS (451 aa). Cystine bridges form between cysteine 126–cysteine 293, cysteine 218–cysteine 225, cysteine 270–cysteine 277, cysteine 381–cysteine 466, cysteine 403–cysteine 443, cysteine 403–cysteine 462, cysteine 407–cysteine 458, cysteine 416–cysteine 443, cysteine 416–cysteine 466, and cysteine 418–cysteine 432. A helical membrane pass occupies residues 550 to 570; that stretch reads VLSVVELVELILDFIAITCIL. Residues 571-636 lie on the Cytoplasmic side of the membrane; it reads AIHWLNMNRS…LRRVSSQQTE (66 aa).

This sequence belongs to the amiloride-sensitive sodium channel (TC 1.A.6) family. SCNN1A subfamily. Heterotrimer; containing an alpha/SCNN1A, a beta/SCNN1B and a gamma/SCNN1G subunit.

It is found in the apical cell membrane. The protein localises to the cell projection. Its subcellular location is the cilium. It localises to the cytoplasmic granule. The protein resides in the cytoplasm. It is found in the cytoplasmic vesicle. The protein localises to the secretory vesicle. Its subcellular location is the acrosome. It localises to the flagellum. The catalysed reaction is Na(+)(in) = Na(+)(out). With respect to regulation, originally identified and characterized by its inhibition by the diuretic drug amiloride. This is one of the three pore-forming subunits of the heterotrimeric epithelial sodium channel (ENaC), a critical regulator of sodium balance and fluid homeostasis. ENaC operates in epithelial tissues, where it mediates the electrodiffusion of sodium ions from extracellular fluid through the apical membrane of cells, with water following osmotically. The protein is Epithelial sodium channel subunit alpha of Anolis carolinensis (Green anole).